A 324-amino-acid polypeptide reads, in one-letter code: Biotin synthase (324 aa).

The region spanning 37 to 264 (NEVQVAALMN…ASYVRLAAGR (228 aa)) is the Radical SAM core domain. Residues C52, C56, and C59 each coordinate [4Fe-4S] cluster. C96, C127, C187, and R259 together coordinate [2Fe-2S] cluster.

It belongs to the radical SAM superfamily. Biotin synthase family. As to quaternary structure, homodimer. It depends on [4Fe-4S] cluster as a cofactor. [2Fe-2S] cluster serves as cofactor.

It catalyses the reaction (4R,5S)-dethiobiotin + (sulfur carrier)-SH + 2 reduced [2Fe-2S]-[ferredoxin] + 2 S-adenosyl-L-methionine = (sulfur carrier)-H + biotin + 2 5'-deoxyadenosine + 2 L-methionine + 2 oxidized [2Fe-2S]-[ferredoxin]. It participates in cofactor biosynthesis; biotin biosynthesis; biotin from 7,8-diaminononanoate: step 2/2. In terms of biological role, catalyzes the conversion of dethiobiotin (DTB) to biotin by the insertion of a sulfur atom into dethiobiotin via a radical-based mechanism. This is Biotin synthase from Anaplasma marginale (strain Florida).